The primary structure comprises 419 residues: UDP-N-acetylglucosamine 1-carboxyvinyltransferase 2 (419 aa).

22-23 lines the phosphoenolpyruvate pocket; that stretch reads KN. Arginine 92 serves as a coordination point for UDP-N-acetyl-alpha-D-glucosamine. Cysteine 116 serves as the catalytic Proton donor. The residue at position 116 (cysteine 116) is a 2-(S-cysteinyl)pyruvic acid O-phosphothioketal. Residues 121 to 125, aspartate 306, and isoleucine 328 each bind UDP-N-acetyl-alpha-D-glucosamine; that span reads RPIDL.

This sequence belongs to the EPSP synthase family. MurA subfamily.

The protein resides in the cytoplasm. The enzyme catalyses phosphoenolpyruvate + UDP-N-acetyl-alpha-D-glucosamine = UDP-N-acetyl-3-O-(1-carboxyvinyl)-alpha-D-glucosamine + phosphate. The protein operates within cell wall biogenesis; peptidoglycan biosynthesis. In terms of biological role, cell wall formation. Adds enolpyruvyl to UDP-N-acetylglucosamine. The chain is UDP-N-acetylglucosamine 1-carboxyvinyltransferase 2 from Streptococcus pyogenes serotype M3 (strain ATCC BAA-595 / MGAS315).